Consider the following 202-residue polypeptide: MIHKYDYHKTHFLFSTSCIKNLLYNVSKEIAFTGSSNVGKSSVINTLTNQKNLARTSKKPGSTKTVNVFEVEPGVNLIDLPGYGYVTMPVALKYHWQHDLIYFLQKCTNLKGLVVLMDIRHPMKFLDKYIIQCAIENKIQVFILLNKADKMNAYACNTQYHTVQQHLSNLESNIKITLFSSVTKLGIKKLKAQLDSWFSIVS.

In terms of domain architecture, EngB-type G spans 26–200 (VSKEIAFTGS…KAQLDSWFSI (175 aa)). GTP contacts are provided by residues 34-41 (GSSNVGKS), 61-65 (GSTKT), 79-82 (DLPG), 146-149 (NKAD), and 179-181 (FSS). Mg(2+) contacts are provided by Ser-41 and Thr-63.

This sequence belongs to the TRAFAC class TrmE-Era-EngA-EngB-Septin-like GTPase superfamily. EngB GTPase family. It depends on Mg(2+) as a cofactor.

Necessary for normal cell division and for the maintenance of normal septation. This Baumannia cicadellinicola subsp. Homalodisca coagulata protein is Probable GTP-binding protein EngB.